The sequence spans 329 residues: Ig gamma-2 chain C region (329 aa).

3 cysteine pairs are disulfide-bonded: Cys-28–Cys-79, Cys-142–Cys-202, and Cys-248–Cys-308. An N-linked (GlcNAc...) asparagine glycan is attached at Asn-178.

It localises to the secreted. The chain is Ig gamma-2 chain C region from Cavia porcellus (Guinea pig).